The following is a 232-amino-acid chain: MSDNLAKAISNPLFPALDSMLRAGRHISTEDLDNHALLSDFELELSSFYQRYNTELVKAPEGFFYLRPRSTSLIGRSVLSELDMLVGKVLCFLYLSPERLAHEGIFTNQELYDELLALADEKKLMKLVTNRATGSDLDKEKLFEKVRTSLRRLRRLGMIINIGETGKFSISEAVFRFGADVRVGDDIREAQLRLIRDGEAVVHTKEPSQGSLLSEEDQEEQAQEEMTEEGEA.

Positions 203 to 232 (HTKEPSQGSLLSEEDQEEQAQEEMTEEGEA) are disordered. Over residues 214–232 (SEEDQEEQAQEEMTEEGEA) the composition is skewed to acidic residues.

The protein belongs to the MukE family. As to quaternary structure, interacts, and probably forms a ternary complex, with MukF and MukB. The complex formation is stimulated by calcium or magnesium.

It localises to the cytoplasm. It is found in the nucleoid. In terms of biological role, involved in chromosome condensation, segregation and cell cycle progression. May participate in facilitating chromosome segregation by condensation DNA from both sides of a centrally located replisome during cell division. Probably acts via its interaction with MukB and MukF. In Vibrio parahaemolyticus serotype O3:K6 (strain RIMD 2210633), this protein is Chromosome partition protein MukE.